A 1221-amino-acid polypeptide reads, in one-letter code: Probable serine/threonine-protein kinase DDB_G0286465 (1221 aa).

Disordered stretches follow at residues 1–37 (MTLR…SPYT), 104–133 (FSPS…NDNQ), and 173–263 (ENNS…NNNE). Composition is skewed to low complexity over residues 24–37 (SSVS…SPYT), 112–127 (KNNN…NNNY), 173–192 (ENNS…NMQK), and 204–263 (NNNN…NNNE). Residues 186 to 627 (INNNMQKTGG…PYKLLDHPFF (442 aa)) form the Protein kinase domain. 192-200 (KTGGRNGSV) contacts ATP. Residue Lys-271 participates in ATP binding. Low complexity predominate over residues 324 to 344 (NVNNNNSNNNNNNSNNNITNS). The disordered stretch occupies residues 324–346 (NVNNNNSNNNNNNSNNNITNSRY). Asp-448 acts as the Proton acceptor in catalysis. 2 stretches are compositionally biased toward low complexity: residues 538–550 (SPSS…TSTS) and 559–584 (DSSS…SLPK). Disordered regions lie at residues 538–604 (SPSS…PEKR), 712–782 (PNLS…KEKL), 823–858 (KFEK…PPLP), 959–1008 (KENI…SYCN), and 1105–1152 (KKQE…QQEK). Residues 591–604 (RSKDNQSKLDPEKR) are compositionally biased toward basic and acidic residues. A compositionally biased stretch (low complexity) spans 725–738 (KKQLQQYQQQQKQQ). The span at 746 to 756 (DDEEEKEEEEK) shows a compositional bias: acidic residues. 2 stretches are compositionally biased toward basic and acidic residues: residues 757–769 (EKEK…KEKE) and 823–850 (KFEK…KDDA). Residues 959 to 993 (KENIINFHNNNNNNNNNNNNNNNNNNNNNNNNNNN) show a composition bias toward low complexity.

Belongs to the protein kinase superfamily. Ser/Thr protein kinase family.

It carries out the reaction L-seryl-[protein] + ATP = O-phospho-L-seryl-[protein] + ADP + H(+). It catalyses the reaction L-threonyl-[protein] + ATP = O-phospho-L-threonyl-[protein] + ADP + H(+). In Dictyostelium discoideum (Social amoeba), this protein is Probable serine/threonine-protein kinase DDB_G0286465.